A 481-amino-acid chain; its full sequence is NADH-quinone oxidoreductase subunit N (481 aa).

Helical transmembrane passes span 11-31 (AIPE…DLFW), 38-58 (LAAV…VFEM), 69-89 (FVLD…VLMV), 107-127 (VFVL…GGSL), 128-148 (LSVY…VAFY), 162-182 (FVLG…LYGL), 203-223 (LVLV…LGAA), 237-257 (PTVV…ALII), 271-291 (WQQI…VIAI), 299-319 (MLAY…VAGT), 327-347 (FFYT…ILLV), 370-390 (YAFL…TVGF), 401-421 (VAAG…IGAF), and 457-477 (LALL…FYAM).

Belongs to the complex I subunit 2 family. NDH-1 is composed of 14 different subunits. Subunits NuoA, H, J, K, L, M, N constitute the membrane sector of the complex.

The protein resides in the cell inner membrane. It carries out the reaction a quinone + NADH + 5 H(+)(in) = a quinol + NAD(+) + 4 H(+)(out). Functionally, NDH-1 shuttles electrons from NADH, via FMN and iron-sulfur (Fe-S) centers, to quinones in the respiratory chain. The immediate electron acceptor for the enzyme in this species is believed to be ubiquinone. Couples the redox reaction to proton translocation (for every two electrons transferred, four hydrogen ions are translocated across the cytoplasmic membrane), and thus conserves the redox energy in a proton gradient. The chain is NADH-quinone oxidoreductase subunit N from Acidithiobacillus ferrooxidans (strain ATCC 23270 / DSM 14882 / CIP 104768 / NCIMB 8455) (Ferrobacillus ferrooxidans (strain ATCC 23270)).